The following is a 348-amino-acid chain: Calcium-gated potassium channel TvoK (348 aa).

3 helical membrane-spanning segments follow: residues 19-39 (LTKVFMAFIIVVLIGSYLEFL), 52-72 (YFTAIWFTMETVTTVGYGDVV), and 80-100 (VVAMLIMVSGIGLLGTLTATI). The RCK N-terminal domain occupies 120–246 (KNHTIICNWN…VSAGATEVLS (127 aa)). Residues 266-348 (DFILKSLSET…KKEVEEAIKG (83 aa)) enclose the RCK C-terminal domain.

As to quaternary structure, heterooctamer composed of four full-length subunits and four soluble RCK domains.

The protein resides in the cell membrane. Functionally, calcium-gated potassium channel. Can also be activated by Mg(2+), Mn(2+) and Ni(2+). The polypeptide is Calcium-gated potassium channel TvoK (Thermoplasma volcanium (strain ATCC 51530 / DSM 4299 / JCM 9571 / NBRC 15438 / GSS1)).